The sequence spans 79 residues: Acyl carrier protein (79 aa).

The Carrier domain maps to 4 to 79 (EQILVDVQEA…DVVAYIETKL (76 aa)). O-(pantetheine 4'-phosphoryl)serine is present on S39.

It belongs to the acyl carrier protein (ACP) family. 4'-phosphopantetheine is transferred from CoA to a specific serine of apo-ACP by AcpS. This modification is essential for activity because fatty acids are bound in thioester linkage to the sulfhydryl of the prosthetic group.

Its subcellular location is the cytoplasm. The protein operates within lipid metabolism; fatty acid biosynthesis. Functionally, carrier of the growing fatty acid chain in fatty acid biosynthesis. The polypeptide is Acyl carrier protein (Exiguobacterium sp. (strain ATCC BAA-1283 / AT1b)).